The sequence spans 185 residues: Ribosome-recycling factor (185 aa).

This sequence belongs to the RRF family.

The protein resides in the cytoplasm. Responsible for the release of ribosomes from messenger RNA at the termination of protein biosynthesis. May increase the efficiency of translation by recycling ribosomes from one round of translation to another. This is Ribosome-recycling factor from Aliivibrio fischeri (strain MJ11) (Vibrio fischeri).